The chain runs to 246 residues: UDP-N-acetyl-D-mannosaminuronic acid transferase (246 aa).

This sequence belongs to the glycosyltransferase 26 family.

The enzyme catalyses UDP-N-acetyl-alpha-D-mannosaminouronate + N-acetyl-alpha-D-glucosaminyl-di-trans,octa-cis-undecaprenyl diphosphate = beta-D-ManNAcA-(1-&gt;4)-alpha-D-GlcNAc-di-trans,octa-cis-undecaprenyl diphosphate + UDP + H(+). Its pathway is bacterial outer membrane biogenesis; enterobacterial common antigen biosynthesis. Functionally, catalyzes the synthesis of Und-PP-GlcNAc-ManNAcA (Lipid II), the second lipid-linked intermediate involved in enterobacterial common antigen (ECA) synthesis. This is UDP-N-acetyl-D-mannosaminuronic acid transferase from Yersinia pseudotuberculosis serotype IB (strain PB1/+).